Here is a 689-residue protein sequence, read N- to C-terminus: Outer spore wall assembly protein SHE10 (689 aa).

The first 18 residues, 1-18 (MKILTKFFLLLVVTTCSL), serve as a signal peptide directing secretion. Residues 259–308 (TKAKSKSKPRVNASASARGNARAGAKAGAKAGTSEISASATADPTTSASA) are disordered. Positions 270–308 (NASASARGNARAGAKAGAKAGTSEISASATADPTTSASA) are enriched in low complexity. The stretch at 406–435 (NKTKTVSEVLQNRYKNLNRAIQDINCTCET) forms a coiled coil. Positions 610–626 (EQESKQREDSPRMDRDS) are enriched in basic and acidic residues. Residues 610–689 (EQESKQREDS…TVQNNVTLQI (80 aa)) are disordered. Composition is skewed to polar residues over residues 627 to 637 (TQNVENSNTTT), 655 to 670 (QNGT…GPDS), and 677 to 689 (METT…TLQI).

The protein belongs to the SHE10 family. In terms of assembly, component of the mitochondria-localized RNase mitochondrial RNA-processing (RNase MRP) composed of one single RNA encoded by the NME1 gene and at least 31 proteins. Absent in the nucleus-localized RNase MRP (NuMRP).

The protein resides in the mitochondrion. Its function is as follows. Involved in spore wall assembly. May be a component of the mitochondrial RNase MRP (MtMRP), a ribonucleoprotein endoribonuclease involved in the cleaving RNA transcripts to generate primers for DNA replication in mitochondria. The sequence is that of Outer spore wall assembly protein SHE10 from Zygosaccharomyces rouxii (strain ATCC 2623 / CBS 732 / NBRC 1130 / NCYC 568 / NRRL Y-229).